The following is a 49-amino-acid chain: MIVYSVFIFAVLAISSVTGIFLPGGGGKKCGGHGEYGSGVIIGAERPKK.

The sequence is that of Fungus-induced-related protein 16 (fipr-16) from Caenorhabditis elegans.